Reading from the N-terminus, the 1136-residue chain is 3-O-alpha-D-galactosyl-alpha-L-arabinofuranosidase (1136 aa).

The N-terminal stretch at 1-36 (MGISRNRLVPGLVGLAASAAIVLPLGIGMPVSSATA) is a signal peptide. Residue E194 is the Proton donor of the active site. E321 serves as the catalytic Nucleophile. 2 consecutive CBM6 domains span residues 521–656 (QAIE…LLLY) and 669–779 (VTYP…VTTA). Residues 987 to 1045 (KASLKVGETLSLNASVTPDSVADKTVQWTSSDEQVATVDEHGVVKGVKAGTVTITATSV) enclose the BIG2 domain. The disordered stretch occupies residues 1049 to 1104 (SRSGSVEVTVAEDSEQKPSGGDGDNNGEQTGKPDGNTGGQTSDSDAGADSGNNQKH). Residues 1087 to 1103 (GQTSDSDAGADSGNNQK) are compositionally biased toward polar residues. Residues 1109–1129 (GAAVAAVAGVAVLLAGAGLLL) form a helical membrane-spanning segment.

It belongs to the glycosyl hydrolase 39 family.

The protein resides in the cell membrane. The protein localises to the secreted. Its subcellular location is the cell wall. It catalyses the reaction Hydrolysis of alpha-D-Galp-(1-&gt;3)-L-Araf disaccharides from non-reducing terminals in branches of type II arabinogalactan attached to proteins.. Hydrolase involved in the degradation of the gum arabic arabinogalactan protein (AGP). Catalyzes the release of 3-O-alpha-D-galactopyranosyl-L-arabinose (alpha-D-Galp-(1-&gt;3)-L-Ara) from gum arabic AGP. Can also release 3-O-beta-L-arabinopyranosyl-L-arabinose (beta-L-Arap-(1-&gt;3)-L-Ara) from gum arabic AGP and larch AGP, but the alpha-D-Galp-(1-&gt;3)-L-Ara release activity is 594-fold higher than the beta-L-Arap-(1-&gt;3)-L-Ara release activity. Exhibits no reactivity toward p-nitrophenyl (pNP)-alpha-Araf or any other tested pNP substrate. Plays a crucial role in gum arabic AGP assimilation in B.longum. The protein is 3-O-alpha-D-galactosyl-alpha-L-arabinofuranosidase of Bifidobacterium longum subsp. longum.